A 70-amino-acid polypeptide reads, in one-letter code: Small ribosomal subunit protein bS21 (70 aa).

Belongs to the bacterial ribosomal protein bS21 family.

This Nitrosospira multiformis (strain ATCC 25196 / NCIMB 11849 / C 71) protein is Small ribosomal subunit protein bS21.